The primary structure comprises 232 residues: MIERRPFDRLGHANHGWLNARHHFSFADYYDPEREDWGRLRVWNDDEIAAGSGFPPHPHRDMEIITYVREGAITHQDSLGNKGRTEAGDVQVMSAGTGIVHSEYNLEAETTRIFQIWIIPDRRGDQPRWGSKPFPKAERDGRFVTLASGDEQDSEALHIRADAEVAAVTLKAGQSAEYALENGRRAYLVPATGSIEVNGVRAEARDGLAVRDEPTLKVTALEDSEVLLVEVA.

4 residues coordinate a divalent metal cation: His-57, His-59, His-101, and Glu-103.

Belongs to the pirin family. The cofactor is a divalent metal cation.

The enzyme catalyses quercetin + O2 = 2-(3,4-dihydroxybenzoyloxy)-4,6-dihydroxybenzoate + CO. The protein operates within flavonoid metabolism; quercetin degradation. In terms of biological role, putative quercetin 2,3-dioxygenase. This Pseudomonas aeruginosa (strain ATCC 15692 / DSM 22644 / CIP 104116 / JCM 14847 / LMG 12228 / 1C / PRS 101 / PAO1) protein is Putative quercetin 2,3-dioxygenase PA1210.